Reading from the N-terminus, the 792-residue chain is Terminal nucleotidyltransferase 4A (792 aa).

Residues 55 to 191 (GAAGRGSGGL…QFHPGRRKRE (137 aa)) form a disordered region. 2 stretches are compositionally biased toward low complexity: residues 80–97 (APAALPPALLTALGPAAE) and 105–139 (SPSLSSSSSSSSSNAESGTESPGCSSSSSSSASLG). Residues Asp297 and Asp299 each contribute to the Mg(2+) site. Residues Gly360, Lys385, Ser403, and Tyr404 each coordinate ATP. Positions 428 to 486 (NLGMLLVEFFELYGRNFNYLKTGIRIKEGGAYIAKEEIMKAMTSGYRPSMLCIEDPLLP) constitute a PAP-associated domain. ATP contacts are provided by Asn488 and Arg492. The segment covering 601 to 619 (QLLSSGSSASSVSSLSGSD) has biased composition (low complexity). 2 disordered regions span residues 601–632 (QLLSSGSSASSVSSLSGSDVDSDTPPCTTPSV) and 737–792 (MKGS…SLSR). The span at 744 to 756 (TQGGGYSSVGSGG) shows a compositional bias: gly residues. Over residues 764–781 (RGHHQYNRTGWRRKKHTH) the composition is skewed to basic residues.

The protein belongs to the DNA polymerase type-B-like family. In terms of assembly, component of a nuclear TRAMP-like complex, an ATP-dependent exosome regulatory complex consisting of a helicase (MTREX), an oligadenylate polymerase (TENT4B or TENT4A), and a substrate specific RNA-binding factor (ZCCHC7 or ZCCHC8). Several TRAMP-like complexes exist with specific compositions and are associated with nuclear, or nucleolar RNA exosomes. Mg(2+) serves as cofactor. Requires Mn(2+) as cofactor.

It is found in the cytoplasm. Its subcellular location is the nucleus. The protein localises to the nucleoplasm. The catalysed reaction is RNA(n) + ATP = RNA(n)-3'-adenine ribonucleotide + diphosphate. Functionally, terminal nucleotidyltransferase that catalyzes preferentially the transfer of ATP and GTP on RNA 3' poly(A) tail creating a heterogeneous 3' poly(A) tail leading to mRNAs stabilization by protecting mRNAs from active deadenylation. Also functions as a catalytic subunit of a TRAMP-like complex which has a poly(A) RNA polymerase activity and is involved in a post-transcriptional quality control mechanism. Polyadenylation with short oligo(A) tails is required for the degradative activity of the exosome on several of its nuclear RNA substrates. Has no terminal uridylyltransferase activity, and does not play a role in replication-dependent histone mRNA degradation via uridylation. The chain is Terminal nucleotidyltransferase 4A from Homo sapiens (Human).